The primary structure comprises 152 residues: Aspartate carbamoyltransferase regulatory chain (152 aa).

Positions 108, 113, 137, and 140 each coordinate Zn(2+).

It belongs to the PyrI family. In terms of assembly, contains catalytic and regulatory chains. The cofactor is Zn(2+).

Involved in allosteric regulation of aspartate carbamoyltransferase. The chain is Aspartate carbamoyltransferase regulatory chain from Neisseria meningitidis serogroup A / serotype 4A (strain DSM 15465 / Z2491).